The following is a 437-amino-acid chain: MKTTHITEQKFADLGLEPTVLEGLDAQGFHYCTPIQALALPVVLTGQDIAGQAQTGTGKTLAFLTATFNYLLLNPASDERKTNQPRAIIMAPTRELAIQIYNDAAPLLASTGLKAGLAYGGEAYEKQQKVFAEGVDILIGTCGRIIDFYKQRVIDLASIQVVVLDEADRMFDLGFIKDIRFLFRRMPAPKARLNMLFSATLSYRVKELAFEHMNSPESVVVEPNQKTGHLIQEELFYPSNQEKMRLLQTLIEEEWPDRAIIFANTKHRCEDIWGHLAADNHRVGLLNGDVPQKKRVRILEQFTQGDIDILVATDVAARGLHIPQVTHVYNYDLPDDAEDYVHRIGRTGRAGESGSSISFACEEYAINLPAIETYIEHPIPLSKYNSEALLDELPAPLRLQRTPRQGGNRRPNGNRQGQGQSRPRNNNRRHPQSQKQQ.

The Q motif signature appears at 9–37; sequence QKFADLGLEPTVLEGLDAQGFHYCTPIQA. In terms of domain architecture, Helicase ATP-binding spans 40-219; the sequence is LPVVLTGQDI…FEHMNSPESV (180 aa). 53 to 60 serves as a coordination point for ATP; the sequence is AQTGTGKT. The DEAD box signature appears at 165–168; sequence DEAD. Residues 245–390 enclose the Helicase C-terminal domain; it reads RLLQTLIEEE…LSKYNSEALL (146 aa). The disordered stretch occupies residues 395 to 437; it reads APLRLQRTPRQGGNRRPNGNRQGQGQSRPRNNNRRHPQSQKQQ. Over residues 400 to 424 the composition is skewed to low complexity; it reads QRTPRQGGNRRPNGNRQGQGQSRPR. Basic residues predominate over residues 425–437; it reads NNNRRHPQSQKQQ.

Belongs to the DEAD box helicase family. RhlB subfamily. Component of the RNA degradosome, which is a multiprotein complex involved in RNA processing and mRNA degradation.

It localises to the cytoplasm. It catalyses the reaction ATP + H2O = ADP + phosphate + H(+). Functionally, DEAD-box RNA helicase involved in RNA degradation. Has RNA-dependent ATPase activity and unwinds double-stranded RNA. The chain is ATP-dependent RNA helicase RhlB from Photobacterium profundum (strain SS9).